A 471-amino-acid chain; its full sequence is MTDLPDSTRWQLWIVAFGFFMQSLDTTIVNTALPSMAQSLGESPLHMHMVIVSYVLTVAVMLPASGWLADKVGVRNIFFTAIVLFTLGSLFCALSGTLNELLLARALQGVGGAMMVPVGRLTVMKIVPREQYMAAMTFVTLPGQVGPLLGPALGGLLVEYASWHWIFLINIPVGIIGAIATLMLMPNYTMQTRRFDLSGFLLLAVGMAVLTLALDGSKGTGLSPLAIAGLVAVGVVALVLYLLHARNNNRALFSLKLFRTRTFSLGLAGSFAGRIGSGMLPFMTPVFLQIGLGFSPFHAGLMMIPMVLGSMGMKRIVVQVVNRFGYRRVLVATTLGLSLVTLLFMTTALLGWYYVLPFVLFLQGMVNSTRFSSMNTLTLKDLPDNLASSGNSLLSMIMQLSMSIGVTIAGLLLGLFGSQHVSVDSGTTQTVFMYTWLSMAFIIALPAFIFARVPNDTHQNVAISRRKRSAQ.

The Periplasmic portion of the chain corresponds to 1-11; the sequence is MTDLPDSTRWQ. Residues 12-32 traverse the membrane as a helical segment; it reads LWIVAFGFFMQSLDTTIVNTA. The Cytoplasmic portion of the chain corresponds to 33-48; that stretch reads LPSMAQSLGESPLHMH. The helical transmembrane segment at 49–69 threads the bilayer; that stretch reads MVIVSYVLTVAVMLPASGWLA. Over 70–76 the chain is Periplasmic; that stretch reads DKVGVRN. The chain crosses the membrane as a helical span at residues 77 to 97; the sequence is IFFTAIVLFTLGSLFCALSGT. At 98–101 the chain is on the cytoplasmic side; the sequence is LNEL. The helical transmembrane segment at 102–124 threads the bilayer; that stretch reads LLARALQGVGGAMMVPVGRLTVM. The Periplasmic segment spans residues 125-137; it reads KIVPREQYMAAMT. A helical membrane pass occupies residues 138–158; sequence FVTLPGQVGPLLGPALGGLLV. The Cytoplasmic portion of the chain corresponds to 159–164; sequence EYASWH. A helical membrane pass occupies residues 165-185; it reads WIFLINIPVGIIGAIATLMLM. Topologically, residues 186 to 196 are periplasmic; it reads PNYTMQTRRFD. The chain crosses the membrane as a helical span at residues 197–217; the sequence is LSGFLLLAVGMAVLTLALDGS. The Cytoplasmic portion of the chain corresponds to 218 to 224; the sequence is KGTGLSP. The chain crosses the membrane as a helical span at residues 225–245; the sequence is LAIAGLVAVGVVALVLYLLHA. Residues 246–262 are Periplasmic-facing; it reads RNNNRALFSLKLFRTRT. Residues 263 to 283 form a helical membrane-spanning segment; that stretch reads FSLGLAGSFAGRIGSGMLPFM. Residues 284 to 285 are Cytoplasmic-facing; it reads TP. The chain crosses the membrane as a helical span at residues 286–306; the sequence is VFLQIGLGFSPFHAGLMMIPM. At 307–341 the chain is on the periplasmic side; that stretch reads VLGSMGMKRIVVQVVNRFGYRRVLVATTLGLSLVT. A helical transmembrane segment spans residues 342-362; that stretch reads LLFMTTALLGWYYVLPFVLFL. Residues 363–395 are Cytoplasmic-facing; it reads QGMVNSTRFSSMNTLTLKDLPDNLASSGNSLLS. The helical transmembrane segment at 396–416 threads the bilayer; that stretch reads MIMQLSMSIGVTIAGLLLGLF. At 417-430 the chain is on the periplasmic side; the sequence is GSQHVSVDSGTTQT. The helical transmembrane segment at 431 to 451 threads the bilayer; sequence VFMYTWLSMAFIIALPAFIFA. Residues 452-471 are Cytoplasmic-facing; the sequence is RVPNDTHQNVAISRRKRSAQ.

Belongs to the major facilitator superfamily. TCR/Tet family.

Its subcellular location is the cell inner membrane. The protein is Putative multidrug resistance protein MdtD of Escherichia coli (strain SMS-3-5 / SECEC).